Here is a 243-residue protein sequence, read N- to C-terminus: Probable transcriptional regulatory protein BPP2422 (243 aa).

Positions 1-21 are disordered; it reads MAGHSKWANIQHRKGRQDAKR.

This sequence belongs to the TACO1 family.

The protein localises to the cytoplasm. This is Probable transcriptional regulatory protein BPP2422 from Bordetella parapertussis (strain 12822 / ATCC BAA-587 / NCTC 13253).